The following is a 355-amino-acid chain: Cyclic nucleotide-gated potassium channel RHE_CH03180 (355 aa).

Residues 1–12 (MSAVPFSKISTP) lie on the Cytoplasmic side of the membrane. Residues 13-30 (LNALFATIGLLVVAALTT) form a helical membrane-spanning segment. Over 31-38 (QGLTGQER) the chain is Periplasmic. Residues 39 to 61 (LVFELLLAAIWLAYVLQLSGTLL) form a helical membrane-spanning segment. Residues 62 to 73 (SRRRRLSGEMTA) lie on the Cytoplasmic side of the membrane. A helical membrane pass occupies residues 74–93 (LVIDLLAVLVPAAAFLFVGS). A helical transmembrane segment spans residues 94 to 111 (RDRDLYCAIWLLKPLRDS). Residues 112-128 (TFFRLLAKVVANESRNL) are Cytoplasmic-facing. A helical membrane pass occupies residues 129–149 (LGVTSVFGIVLFGAALAGYII). Residues 150-160 (ERDVQPDKFGS) are Periplasmic-facing. The segment at residues 161–179 (IPQAMWWAVVTLSTTGYGD) is an intramembrane region (pore-forming). The Selectivity filter motif lies at 174–179 (TTGYGD). At 180-184 (EIPQS) the chain is on the periplasmic side. Residues 185-209 (LAGRVLAGLVMMSGIGIFALWAGIL) form a helical membrane-spanning segment. The Cytoplasmic portion of the chain corresponds to 210–355 (ATGFYEEVRR…LERRGGPPKE (146 aa)). Residues 297–298 (GE), 307–308 (RS), and Arg348 each bind 3',5'-cyclic AMP.

Belongs to the potassium channel family. As to quaternary structure, homotetramer.

The protein resides in the cell membrane. Cyclic nucleotide-regulated potassium channel activated by cAMP. The sequence is that of Cyclic nucleotide-gated potassium channel RHE_CH03180 from Rhizobium etli (strain ATCC 51251 / DSM 11541 / JCM 21823 / NBRC 15573 / CFN 42).